Reading from the N-terminus, the 110-residue chain is MSSKAKLEEIPITVDFSGGLEMLFDNQRRHSISLPAKDTEGKPVTIAFLIDYICKKLMKDPRTDLFVLDNHIRPGILVLINDADWELEGEEAYEIQPNDNILFVSTLHGG.

Residue Gly110 is modified to 1-thioglycine. Gly110 is covalently cross-linked (Glycyl lysine isopeptide (Gly-Lys) (interchain with K-? in acceptor proteins)).

The protein belongs to the URM1 family. As to quaternary structure, homodimer; homodimerization may provide an autoprotection to the highly active C-terminal residue before attacking its substrates. Forms a conjugate with the target protein AHP1. In terms of processing, C-terminal thiocarboxylation occurs in 2 steps, it is first acyl-adenylated (-COAMP) via the hesA/moeB/thiF part of UBA4, then thiocarboxylated (-COSH) via the rhodanese domain of UBA4.

The protein resides in the cytoplasm. It participates in tRNA modification; 5-methoxycarbonylmethyl-2-thiouridine-tRNA biosynthesis. Its function is as follows. Acts as a sulfur carrier required for 2-thiolation of mcm(5)S(2)U at tRNA wobble positions of cytosolic tRNA(Lys), tRNA(Glu) and tRNA(Gln). Serves as sulfur donor in tRNA 2-thiolation reaction by being thiocarboxylated (-COSH) at its C-terminus by the MOCS3 homolog UBA4. The sulfur is then transferred to tRNA to form 2-thiolation of mcm(5)S(2)U. Prior mcm(5) tRNA modification by the elongator complex is required for 2-thiolation. Also acts as a ubiquitin-like protein (UBL) that is covalently conjugated via an isopeptide bond to lysine residues of target proteins such as AHP1. Conjugation does not depend on the canonical cascade of E2 ubiquitin-conjugating enzymes and/or E3 ligases. The conjugation reaction requires a thiocarboxylated C-terminus of URM1 and a peroxidatic cysteine in the target protein, as the sulfur atom of the URM1 thiocarboxyl group is transferred to redox-active cysteine residues in the target protein. Oxidative stress specifically induces the formation of UBL-protein conjugates. Covalent modification with URM1 promotes the phase separation of a wide range of proteins into condensates like stress granules. The sequence is that of Ubiquitin-related modifier 1 from Chaetomium thermophilum (strain DSM 1495 / CBS 144.50 / IMI 039719) (Thermochaetoides thermophila).